We begin with the raw amino-acid sequence, 127 residues long: Glycine cleavage system H protein (127 aa).

A Lipoyl-binding domain is found at lysine 22–glutamate 104. Lysine 63 carries the post-translational modification N6-lipoyllysine.

The protein belongs to the GcvH family. In terms of assembly, the glycine cleavage system is composed of four proteins: P, T, L and H. (R)-lipoate is required as a cofactor.

Functionally, the glycine cleavage system catalyzes the degradation of glycine. The H protein shuttles the methylamine group of glycine from the P protein to the T protein. Is also involved in protein lipoylation via its role as an octanoyl/lipoyl carrier protein intermediate. The protein is Glycine cleavage system H protein of Bacillus licheniformis (strain ATCC 14580 / DSM 13 / JCM 2505 / CCUG 7422 / NBRC 12200 / NCIMB 9375 / NCTC 10341 / NRRL NRS-1264 / Gibson 46).